Consider the following 576-residue polypeptide: Cyclic nucleotide-binding domain-containing protein 2 (576 aa).

116–239 (SYRNYAEPLQ…DAQYRFEFFR (124 aa)) contributes to the a nucleoside 3',5'-cyclic phosphate binding site.

It is found in the cytoplasm. The protein localises to the cytosol. Essential for male fertility. Plays an important role in spermatogenesis and regulates sperm motility by controlling the development of the flagellar bending of sperm. The sequence is that of Cyclic nucleotide-binding domain-containing protein 2 (CNBD2) from Homo sapiens (Human).